Here is a 247-residue protein sequence, read N- to C-terminus: MNKLLRKVRKAFSLKADNKAETGIGTLIVFIAMVLVAAVAATVLVHTAGTLQQKATSTGSQTTQQVSTGIQVNSIYGLDSNKSVPTHGVIEWLAIQISITAGSSPINLANVTISLTYHGVSASLTYVGLENIGNATVTNDVYGFNSAVGGTNNVFNSSYFKTINGASNGSKHFAILVLSDPTNSMTAQYPVISYEDQVDLLVNVSAVFGGITEGQAVSGEVQAPVGSPGVIQFTAPESFVSDVIQLQ.

A propeptide spanning residues 1-20 is cleaved from the precursor; that stretch reads MNKLLRKVRKAFSLKADNKA.

This sequence belongs to the archaeal flagellin family. Post-translationally, glycosylated.

It is found in the archaeal flagellum. Its function is as follows. Flagellin is the subunit protein which polymerizes to form the filaments of archaeal flagella. This is Flagellin B1 from Thermoplasma volcanium (strain ATCC 51530 / DSM 4299 / JCM 9571 / NBRC 15438 / GSS1).